Consider the following 365-residue polypeptide: NAD(P)H-quinone oxidoreductase subunit 1, chloroplastic (365 aa).

The next 8 membrane-spanning stretches (helical) occupy residues 27–47, 98–118, 129–149, 165–185, 203–223, 253–273, 302–322, and 345–365; these read VWIF…VLVI, FSIG…VIPF, IGIF…LMSG, AAQS…ISLL, FWGW…ISSL, FGLF…FVTI, IFGT…FLFI, and FLLP…LFSL.

The protein belongs to the complex I subunit 1 family. NDH is composed of at least 16 different subunits, 5 of which are encoded in the nucleus.

It localises to the plastid. It is found in the chloroplast thylakoid membrane. The catalysed reaction is a plastoquinone + NADH + (n+1) H(+)(in) = a plastoquinol + NAD(+) + n H(+)(out). It carries out the reaction a plastoquinone + NADPH + (n+1) H(+)(in) = a plastoquinol + NADP(+) + n H(+)(out). NDH shuttles electrons from NAD(P)H:plastoquinone, via FMN and iron-sulfur (Fe-S) centers, to quinones in the photosynthetic chain and possibly in a chloroplast respiratory chain. The immediate electron acceptor for the enzyme in this species is believed to be plastoquinone. Couples the redox reaction to proton translocation, and thus conserves the redox energy in a proton gradient. The protein is NAD(P)H-quinone oxidoreductase subunit 1, chloroplastic of Arabis hirsuta (Hairy rock-cress).